Here is a 309-residue protein sequence, read N- to C-terminus: Taste receptor type 2 member 113 (309 aa).

Residues 1–10 (MVAVLQSTLP) are Extracellular-facing. Residues 11–31 (IIFSMEFIMGTLGNGFIFLIV) traverse the membrane as a helical segment. The Cytoplasmic segment spans residues 32-55 (CIDWVQRRKISLVDQIRTALAISR). A helical membrane pass occupies residues 56–76 (IALIWLIFLDWWVSVHYPALH). The Extracellular segment spans residues 77-80 (ETGK). Residues 81 to 101 (MLSTYLISWTVINHCNFWLTA) traverse the membrane as a helical segment. Residues 102-127 (NLSILYFLKIANFSNIIFLYLKFRSK) lie on the Cytoplasmic side of the membrane. Residues 128-148 (NVVLVTLLVSLFFLFLNTVII) form a helical membrane-spanning segment. The Extracellular portion of the chain corresponds to 149–185 (KIFSDVCFDSVQRNVSQIFIMYNHEQICKFLSFTNPM). Asparagine 162 carries an N-linked (GlcNAc...) asparagine glycan. The helical transmembrane segment at 186 to 206 (FTFIPFVMSTVMFSLLIFSLW) threads the bilayer. The Cytoplasmic segment spans residues 207–229 (RHLKNMQHTAKGCRDISTTVHIR). A helical transmembrane segment spans residues 230-250 (ALQTIIVSVVLYTIFFLSFFV). At 251-262 (KVWSFVSPERYL) the chain is on the extracellular side. The chain crosses the membrane as a helical span at residues 263–283 (IFLFVWALGNAVFSAHPFVMI). Residues 284-309 (LVNRRLRLASLSLIFWLWYRFKNIEV) lie on the Cytoplasmic side of the membrane.

This sequence belongs to the G-protein coupled receptor T2R family.

It localises to the membrane. In terms of biological role, putative taste receptor which may play a role in the perception of bitterness. The polypeptide is Taste receptor type 2 member 113 (Mus musculus (Mouse)).